We begin with the raw amino-acid sequence, 494 residues long: GTPase Der (494 aa).

EngA-type G domains are found at residues 3-166 and 206-379; these read PVVA…AEQM and IKLA…RSAT. GTP is bound by residues 9–16, 56–60, 118–121, 212–219, 259–263, and 324–327; these read GRPNVGKS, DTGGI, NKVD, DTAGV, and NKWD. Residues 380-464 enclose the KH-like domain; sequence TRVGTSVLTR…PIRIQFQNSE (85 aa).

Belongs to the TRAFAC class TrmE-Era-EngA-EngB-Septin-like GTPase superfamily. EngA (Der) GTPase family. Associates with the 50S ribosomal subunit.

Its function is as follows. GTPase that plays an essential role in the late steps of ribosome biogenesis. This is GTPase Der from Vibrio cholerae serotype O1 (strain ATCC 39541 / Classical Ogawa 395 / O395).